A 335-amino-acid chain; its full sequence is N-acetyl-gamma-glutamyl-phosphate reductase (335 aa).

Residue Cys-147 is part of the active site.

The protein belongs to the NAGSA dehydrogenase family. Type 1 subfamily.

The protein localises to the cytoplasm. The enzyme catalyses N-acetyl-L-glutamate 5-semialdehyde + phosphate + NADP(+) = N-acetyl-L-glutamyl 5-phosphate + NADPH + H(+). Its pathway is amino-acid biosynthesis; L-arginine biosynthesis; N(2)-acetyl-L-ornithine from L-glutamate: step 3/4. Its function is as follows. Catalyzes the NADPH-dependent reduction of N-acetyl-5-glutamyl phosphate to yield N-acetyl-L-glutamate 5-semialdehyde. The polypeptide is N-acetyl-gamma-glutamyl-phosphate reductase (Campylobacter hominis (strain ATCC BAA-381 / DSM 21671 / CCUG 45161 / LMG 19568 / NCTC 13146 / CH001A)).